Consider the following 260-residue polypeptide: Large ribosomal subunit protein uL2 (260 aa).

The segment at 1 to 24 is disordered; that stretch reads MGRVIRAQRKGAGSVFKSHTHHRK.

Belongs to the universal ribosomal protein uL2 family.

The protein resides in the cytoplasm. The polypeptide is Large ribosomal subunit protein uL2 (RPL8) (Solanum lycopersicum (Tomato)).